The following is a 121-amino-acid chain: Large ribosomal subunit protein uL14 (121 aa).

Belongs to the universal ribosomal protein uL14 family. As to quaternary structure, part of the 50S ribosomal subunit. Forms a cluster with proteins L3 and L19. In the 70S ribosome, L14 and L19 interact and together make contacts with the 16S rRNA in bridges B5 and B8.

Functionally, binds to 23S rRNA. Forms part of two intersubunit bridges in the 70S ribosome. This Mycoplasmopsis synoviae (strain 53) (Mycoplasma synoviae) protein is Large ribosomal subunit protein uL14.